The sequence spans 20 residues: Probable cinnamyl alcohol dehydrogenase 1 (20 aa).

This sequence belongs to the zinc-containing alcohol dehydrogenase family. Zn(2+) is required as a cofactor.

It carries out the reaction (E)-cinnamyl alcohol + NADP(+) = (E)-cinnamaldehyde + NADPH + H(+). The enzyme catalyses (E)-coniferol + NADP(+) = (E)-coniferaldehyde + NADPH + H(+). It catalyses the reaction (E)-sinapyl alcohol + NADP(+) = (E)-sinapaldehyde + NADPH + H(+). The catalysed reaction is (E)-4-coumaroyl alcohol + NADP(+) = (E)-4-coumaraldehyde + NADPH + H(+). It carries out the reaction (E)-caffeyl alcohol + NADP(+) = (E)-caffeyl aldehyde + NADPH + H(+). Its pathway is aromatic compound metabolism; phenylpropanoid biosynthesis. Its function is as follows. Involved in lignin biosynthesis. Catalyzes the final step specific for the production of lignin monomers, like coniferyl alcohol, sinapyl alcohol and 4-coumaryl alcohol. The protein is Probable cinnamyl alcohol dehydrogenase 1 of Pseudotsuga menziesii (Douglas-fir).